A 607-amino-acid polypeptide reads, in one-letter code: Probable CoA ligase CCL8 (607 aa).

ATP-binding positions include 236–244 (TSGTTGKPK), 391–396 (ERYGMT), D474, 486–489 (ILGR), and K591. The segment at 305–391 (SVRGIWQRWR…QTITGHRLLE (87 aa)) is SBD1. The interval 392–453 (RYGMTEFVMA…VRSPSLFKEY (62 aa)) is SBD2.

It belongs to the ATP-dependent AMP-binding enzyme family. In terms of tissue distribution, mostly expressed at low levels in glandular trichomes (lupulin glands) after flowering, and, to a lower extent, in stems, leaves, flowers and cones.

Its subcellular location is the cytoplasm. It localises to the cytosol. The sequence is that of Probable CoA ligase CCL8 from Humulus lupulus (European hop).